The sequence spans 366 residues: tRNA 2-selenouridine synthase (366 aa).

The region spanning 12–135 (FLNDVPMMDA…MRTFLLDTLH (124 aa)) is the Rhodanese domain. The active-site S-selanylcysteine intermediate is the C95.

It belongs to the SelU family. As to quaternary structure, monomer.

It catalyses the reaction 5-methylaminomethyl-2-thiouridine(34) in tRNA + selenophosphate + (2E)-geranyl diphosphate + H2O + H(+) = 5-methylaminomethyl-2-selenouridine(34) in tRNA + (2E)-thiogeraniol + phosphate + diphosphate. The catalysed reaction is 5-methylaminomethyl-2-thiouridine(34) in tRNA + (2E)-geranyl diphosphate = 5-methylaminomethyl-S-(2E)-geranyl-thiouridine(34) in tRNA + diphosphate. The enzyme catalyses 5-methylaminomethyl-S-(2E)-geranyl-thiouridine(34) in tRNA + selenophosphate + H(+) = 5-methylaminomethyl-2-(Se-phospho)selenouridine(34) in tRNA + (2E)-thiogeraniol. It carries out the reaction 5-methylaminomethyl-2-(Se-phospho)selenouridine(34) in tRNA + H2O = 5-methylaminomethyl-2-selenouridine(34) in tRNA + phosphate. Functionally, involved in the post-transcriptional modification of the uridine at the wobble position (U34) of tRNA(Lys), tRNA(Glu) and tRNA(Gln). Catalyzes the conversion of 2-thiouridine (S2U-RNA) to 2-selenouridine (Se2U-RNA). Acts in a two-step process involving geranylation of 2-thiouridine (S2U) to S-geranyl-2-thiouridine (geS2U) and subsequent selenation of the latter derivative to 2-selenouridine (Se2U) in the tRNA chain. This Pseudomonas syringae pv. tomato (strain ATCC BAA-871 / DC3000) protein is tRNA 2-selenouridine synthase.